A 457-amino-acid chain; its full sequence is Glutamate--tRNA ligase 2 (457 aa).

The 'HIGH' region signature appears at 9 to 19 (PSPTGRIHIGN). Positions 250 to 254 (GLSKR) match the 'KMSKS' region motif. Lys-253 is an ATP binding site.

It belongs to the class-I aminoacyl-tRNA synthetase family. Glutamate--tRNA ligase type 1 subfamily. In terms of assembly, monomer.

The protein resides in the cytoplasm. The catalysed reaction is tRNA(Glu) + L-glutamate + ATP = L-glutamyl-tRNA(Glu) + AMP + diphosphate. Catalyzes the attachment of glutamate to tRNA(Glu) in a two-step reaction: glutamate is first activated by ATP to form Glu-AMP and then transferred to the acceptor end of tRNA(Glu). The chain is Glutamate--tRNA ligase 2 from Mesorhizobium japonicum (strain LMG 29417 / CECT 9101 / MAFF 303099) (Mesorhizobium loti (strain MAFF 303099)).